Reading from the N-terminus, the 434-residue chain is Zinc finger protein Pegasus (434 aa).

The segment at 33-57 (VSSDKEAETLQGAGTDSDQNGLDHP) is disordered. 3 C2H2-type zinc fingers span residues 82-104 (LKCR…IRIH), 110-132 (HRCH…MRSH), and 138-161 (YKCE…RRKH). Residues 260–274 (GQLSSLPPDTQNPAS) show a composition bias toward polar residues. Residues 260–357 (GQLSSLPPDT…PSTPAPALPA (98 aa)) form a disordered region. A compositionally biased stretch (low complexity) spans 296–313 (CASAVSTSVAQSSSPASP). A compositionally biased stretch (polar residues) spans 337-349 (RTSTPSISNSQPS). C2H2-type zinc fingers lie at residues 364–386 (HHCQ…MGCH) and 392–419 (FQCN…CCQH).

This sequence belongs to the Ikaros C2H2-type zinc-finger protein family. As to quaternary structure, probably self-associates.

It localises to the nucleus. Transcriptional repressor that binds the core 5'GNNTGTNG-3' DNA consensus sequence. The protein is Zinc finger protein Pegasus (ikzf5) of Xenopus tropicalis (Western clawed frog).